Reading from the N-terminus, the 400-residue chain is Acyl-CoA dehydrogenase FadE26 (400 aa).

FAD contacts are provided by residues 127–130 (IGYS), T136, and S162. E247 serves as the catalytic Proton acceptor. Residue 380–382 (TNE) coordinates FAD.

This sequence belongs to the acyl-CoA dehydrogenase family. Heterotetramer (dimer of heterodimers) composed of FadE26 and FadE27. It depends on FAD as a cofactor.

It carries out the reaction (25S)-3-oxocholest-4-en-26-oyl-CoA + A = 3-oxo-cholest-4,24-dien-26-oyl-CoA + AH2. It functions in the pathway steroid metabolism; cholesterol degradation. Uncompetitively inhibited by high concentration of 3-OCS-CoA. Involved in the first cycle of side chain dehydrogenation in the beta-oxidation of cholesterol catabolism. It contributes partly to the virulence by increasing the efficiency of beta-oxidation. Catalyzes the dehydrogenation of acyl-CoA ester side chains of (25S)-3-oxo-cholest-4-en-26-oyl-CoA (3-OCS-CoA) to yield (24E)-3-oxo-cholest-4,24-dien-26-oyl-CoA. Also able to dehydrogenate steroyl-CoA such as 3-oxo-chol-4-en-24-oyl-CoA (3-OCO-CoA) as well as 3-oxo-4-pregnene-20-carboxyl-CoA (3-OPC-CoA). It dehydrogenates only (25S)-OCS-CoA diastereomer. This Mycobacterium tuberculosis (strain ATCC 25618 / H37Rv) protein is Acyl-CoA dehydrogenase FadE26 (fadE26).